Reading from the N-terminus, the 99-residue chain is Translation initiation factor 1A (99 aa).

In terms of domain architecture, S1-like spans 11–84 (RRVRTPRRGE…EKADIVWRYT (74 aa)).

It belongs to the eIF-1A family.

Its function is as follows. Seems to be required for maximal rate of protein biosynthesis. Enhances ribosome dissociation into subunits and stabilizes the binding of the initiator Met-tRNA(I) to 40 S ribosomal subunits. In Methanothermobacter thermautotrophicus (strain ATCC 29096 / DSM 1053 / JCM 10044 / NBRC 100330 / Delta H) (Methanobacterium thermoautotrophicum), this protein is Translation initiation factor 1A (eIF1A).